A 218-amino-acid chain; its full sequence is Elongation factor Ts (218 aa).

Residues 82–85 (TDFV) form an involved in Mg(2+) ion dislocation from EF-Tu region.

It belongs to the EF-Ts family.

It is found in the cytoplasm. In terms of biological role, associates with the EF-Tu.GDP complex and induces the exchange of GDP to GTP. It remains bound to the aminoacyl-tRNA.EF-Tu.GTP complex up to the GTP hydrolysis stage on the ribosome. The protein is Elongation factor Ts of Picosynechococcus sp. (strain ATCC 27264 / PCC 7002 / PR-6) (Agmenellum quadruplicatum).